The chain runs to 757 residues: Chloride anion exchanger (757 aa).

Residues 1–71 (MIEAIGNQYV…SWLPAYKIKE (71 aa)) are Cytoplasmic-facing. Residues 72-92 (WLLSDIVSGISTGLVAVLQGL) form a helical membrane-spanning segment. Ala93 is a topological domain (extracellular). Residues 94–114 (FALLVNIPPAYGLYAAFFPVI) traverse the membrane as a helical segment. The Cytoplasmic segment spans residues 115 to 124 (TYFFLGTSRH). A helical membrane pass occupies residues 125–145 (ISVGPFPVLSMMVGVVVTRVA). The Extracellular segment spans residues 146–176 (SGSDTSPALSSSSAENDSMIEEKVMVAASVT). N-linked (GlcNAc...) asparagine glycosylation is present at Asn161. A helical membrane pass occupies residues 177–197 (VLSGIIQLLLGVLQIGFVVIY). Topologically, residues 198 to 201 (LSES) are cytoplasmic. Residues 202–222 (LISGFTTAAAIHVLVSQLKFM) traverse the membrane as a helical segment. Topologically, residues 223 to 250 (LQLTVPAHSDPFSIFKVLESVFSQIQKT) are extracellular. A helical membrane pass occupies residues 251 to 271 (NIADLVTSVIILVVVFVVKEI). Topologically, residues 272-278 (NQRYRSK) are cytoplasmic. A helical membrane pass occupies residues 279-299 (LPVPIPIELIMTVIATGISYG). Topologically, residues 300-335 (CNFEQRFGVAVVGNMSLGFQPPITPSVEVFQDTIGD) are extracellular. Residues 336 to 356 (CFGIAIVGFAVAFSVASVYSL) form a helical membrane-spanning segment. At 357–367 (KYDYPIDGNQE) the chain is on the cytoplasmic side. A helical membrane pass occupies residues 368–388 (LIALGVSNIFTGAFKGFAGST). The Extracellular segment spans residues 389 to 404 (ALSRSGVQESTGGKTQ). A helical membrane pass occupies residues 405 to 425 (VAGLLSAVIVLIVIVAIGFLL). Residues 426–462 (QPLQKSVLAALALGNLKGMLMQFAEIGRLWKKDKYDC) are Cytoplasmic-facing. Residues 463–483 (LIWIMTFIFAIVLGLGLGLAA) form a helical membrane-spanning segment. Residues 484–757 (SVAFQLLTIV…ECQVPVETKF (274 aa)) lie on the Extracellular side of the membrane. Positions 518-713 (NYADVYEPEG…LTIHDAILHI (196 aa)) constitute an STAS domain. The short motif at 754-757 (ETKF) is the PDZ-binding element.

It belongs to the SLC26A/SulP transporter (TC 2.A.53) family. In terms of assembly, interacts with PDZK1, CFTR, SLC26A6 and NHERF1. Interacts (via PDZ-binding motif) with NHERF4 (via the third PDZ domain); interaction leads to decreased expression of SLC26A3 on the cell membrane resulting in its reduced exchanger activity. In terms of processing, N-glycosylation is required for efficient cell surface expression, and protection from proteolytic degradation.

It is found in the apical cell membrane. It localises to the membrane. Its subcellular location is the cell membrane. It carries out the reaction hydrogencarbonate(in) + 2 chloride(out) = hydrogencarbonate(out) + 2 chloride(in). Functionally, mediates chloride-bicarbonate exchange with a chloride bicarbonate stoichiometry of 2:1 in the intestinal epithelia. Plays a role in the chloride and bicarbonate homeostasis during sperm epididymal maturation and capacitation. In Rattus norvegicus (Rat), this protein is Chloride anion exchanger (Slc26a3).